The chain runs to 567 residues: Zinc finger protein 512 (567 aa).

The disordered stretch occupies residues 1-32 (MSSRLGAVPATSGPTTFKQQRSTRIVGAKNSR). Residues 12–23 (SGPTTFKQQRST) show a composition bias toward polar residues. Residues Lys-18 and Lys-84 each participate in a glycyl lysine isopeptide (Lys-Gly) (interchain with G-Cter in SUMO2) cross-link. Residues 86 to 148 (AATSHVEGSG…QARRIRKEPP (63 aa)) form a disordered region. Residues 119-130 (KKHKLYGRKQRP) show a composition bias toward basic residues. Residues 197-220 (FTCHHCGKQLRSLAGMKYHVMANH) form a C2H2-type 1 zinc finger. Lys-227 participates in a covalent cross-link: Glycyl lysine isopeptide (Lys-Gly) (interchain with G-Cter in SUMO2). The segment at 287 to 310 (LKCHHCGKPYRSKAGLAYHLRSEH) adopts a C2H2-type 2 zinc-finger fold. Lys-333 is covalently cross-linked (Glycyl lysine isopeptide (Lys-Gly) (interchain with G-Cter in SUMO2)). The C2H2-type 3; atypical zinc finger occupies 406–430 (IQCPNQGCEAVYSSVSGLKAHLGSC). The C2H2-type 4 zinc-finger motif lies at 440 to 463 (YKCLLCQKEFVSESGVKYHINSVH). The disordered stretch occupies residues 486–567 (QRQQEEEKRR…PKTNHKRGRK (82 aa)). Positions 495–508 (RQQHRSRRSLRRRQ) are enriched in basic residues. The span at 523-532 (VGKDQRRNNE) shows a compositional bias: basic and acidic residues. A compositionally biased stretch (basic residues) spans 556–567 (KPPKTNHKRGRK).

Belongs to the krueppel C2H2-type zinc-finger protein family.

The protein localises to the nucleus. May be involved in transcriptional regulation. The chain is Zinc finger protein 512 (ZNF512) from Homo sapiens (Human).